The primary structure comprises 144 residues: Peptide methionine sulfoxide reductase MsrB (144 aa).

Residues 5–127 enclose the MsrB domain; sequence KEEKIKSLNR…NSAALRFIPK (123 aa). Cys116 acts as the Nucleophile in catalysis.

Belongs to the MsrB Met sulfoxide reductase family.

It catalyses the reaction L-methionyl-[protein] + [thioredoxin]-disulfide + H2O = L-methionyl-(R)-S-oxide-[protein] + [thioredoxin]-dithiol. The sequence is that of Peptide methionine sulfoxide reductase MsrB from Bacillus velezensis (strain DSM 23117 / BGSC 10A6 / LMG 26770 / FZB42) (Bacillus amyloliquefaciens subsp. plantarum).